The chain runs to 165 residues: MRILGVDPGYGIVGIGIIEVSGNRISHVFHGTIETPKDLPAEKRLKRIYEEFLKVLERFSPDECAMEKLFFVKNVTTAIGVGEARGVLLLALAEKNIPVFEYAPNEVKVSLSGYGRASKKQIQENIKRFLNLSEIPRPDDAADALAIAWCHALQSRARRVTHGEN.

Catalysis depends on residues aspartate 7, glutamate 67, and aspartate 140. The Mg(2+) site is built by aspartate 7, glutamate 67, and aspartate 140.

The protein belongs to the RuvC family. In terms of assembly, homodimer which binds Holliday junction (HJ) DNA. The HJ becomes 2-fold symmetrical on binding to RuvC with unstacked arms; it has a different conformation from HJ DNA in complex with RuvA. In the full resolvosome a probable DNA-RuvA(4)-RuvB(12)-RuvC(2) complex forms which resolves the HJ. Mg(2+) is required as a cofactor.

The protein resides in the cytoplasm. It carries out the reaction Endonucleolytic cleavage at a junction such as a reciprocal single-stranded crossover between two homologous DNA duplexes (Holliday junction).. Its function is as follows. The RuvA-RuvB-RuvC complex processes Holliday junction (HJ) DNA during genetic recombination and DNA repair. Endonuclease that resolves HJ intermediates. Cleaves cruciform DNA by making single-stranded nicks across the HJ at symmetrical positions within the homologous arms, yielding a 5'-phosphate and a 3'-hydroxyl group; requires a central core of homology in the junction. The consensus cleavage sequence is 5'-(A/T)TT(C/G)-3'. Cleavage occurs on the 3'-side of the TT dinucleotide at the point of strand exchange. HJ branch migration catalyzed by RuvA-RuvB allows RuvC to scan DNA until it finds its consensus sequence, where it cleaves and resolves the cruciform DNA. This Thermotoga petrophila (strain ATCC BAA-488 / DSM 13995 / JCM 10881 / RKU-1) protein is Crossover junction endodeoxyribonuclease RuvC.